Here is a 196-residue protein sequence, read N- to C-terminus: Putative NADH dehydrogenase/NAD(P)H nitroreductase xcc-b100_0585 (196 aa).

This sequence belongs to the nitroreductase family. HadB/RutE subfamily. FMN is required as a cofactor.

The polypeptide is Putative NADH dehydrogenase/NAD(P)H nitroreductase xcc-b100_0585 (Xanthomonas campestris pv. campestris (strain B100)).